The chain runs to 57 residues: Large ribosomal subunit protein bL32 (57 aa).

Positions 1 to 19 (MAVPKRRMSRSNTRSRRSQ) are enriched in basic residues. The segment at 1-22 (MAVPKRRMSRSNTRSRRSQWKA) is disordered.

The protein belongs to the bacterial ribosomal protein bL32 family.

The chain is Large ribosomal subunit protein bL32 from Rhodococcus jostii (strain RHA1).